We begin with the raw amino-acid sequence, 383 residues long: ATP phosphoribosyltransferase regulatory subunit (383 aa).

The protein belongs to the class-II aminoacyl-tRNA synthetase family. HisZ subfamily. In terms of assembly, heteromultimer composed of HisG and HisZ subunits.

Its subcellular location is the cytoplasm. The protein operates within amino-acid biosynthesis; L-histidine biosynthesis; L-histidine from 5-phospho-alpha-D-ribose 1-diphosphate: step 1/9. In terms of biological role, required for the first step of histidine biosynthesis. May allow the feedback regulation of ATP phosphoribosyltransferase activity by histidine. In Paraburkholderia xenovorans (strain LB400), this protein is ATP phosphoribosyltransferase regulatory subunit.